The chain runs to 362 residues: Phosphoserine aminotransferase (362 aa).

Residue R43 coordinates L-glutamate. Pyridoxal 5'-phosphate is bound by residues 77-78 (AT), W103, T153, D173, and Q196. K197 bears the N6-(pyridoxal phosphate)lysine mark. Residue 238–239 (NT) participates in pyridoxal 5'-phosphate binding.

The protein belongs to the class-V pyridoxal-phosphate-dependent aminotransferase family. SerC subfamily. As to quaternary structure, homodimer. Requires pyridoxal 5'-phosphate as cofactor.

It is found in the cytoplasm. The enzyme catalyses O-phospho-L-serine + 2-oxoglutarate = 3-phosphooxypyruvate + L-glutamate. The catalysed reaction is 4-(phosphooxy)-L-threonine + 2-oxoglutarate = (R)-3-hydroxy-2-oxo-4-phosphooxybutanoate + L-glutamate. Its pathway is amino-acid biosynthesis; L-serine biosynthesis; L-serine from 3-phospho-D-glycerate: step 2/3. It participates in cofactor biosynthesis; pyridoxine 5'-phosphate biosynthesis; pyridoxine 5'-phosphate from D-erythrose 4-phosphate: step 3/5. Catalyzes the reversible conversion of 3-phosphohydroxypyruvate to phosphoserine and of 3-hydroxy-2-oxo-4-phosphonooxybutanoate to phosphohydroxythreonine. The polypeptide is Phosphoserine aminotransferase (Acidithiobacillus ferrooxidans (strain ATCC 23270 / DSM 14882 / CIP 104768 / NCIMB 8455) (Ferrobacillus ferrooxidans (strain ATCC 23270))).